Here is a 306-residue protein sequence, read N- to C-terminus: UDP-N-acetylenolpyruvoylglucosamine reductase (306 aa).

An FAD-binding PCMH-type domain is found at 34 to 199 (KSGGAAEWLF…VAATFRGHAE (166 aa)). Arg-179 is a catalytic residue. Residues 215–234 (REASQPLRSRTGGSTFKNPQ) are disordered. Positions 220–232 (PLRSRTGGSTFKN) are enriched in polar residues. The active-site Proton donor is Ser-228. The active site involves Glu-298.

This sequence belongs to the MurB family. Requires FAD as cofactor.

Its subcellular location is the cytoplasm. It catalyses the reaction UDP-N-acetyl-alpha-D-muramate + NADP(+) = UDP-N-acetyl-3-O-(1-carboxyvinyl)-alpha-D-glucosamine + NADPH + H(+). The protein operates within cell wall biogenesis; peptidoglycan biosynthesis. Cell wall formation. The protein is UDP-N-acetylenolpyruvoylglucosamine reductase of Rhizorhabdus wittichii (strain DSM 6014 / CCUG 31198 / JCM 15750 / NBRC 105917 / EY 4224 / RW1) (Sphingomonas wittichii).